Reading from the N-terminus, the 1479-residue chain is MHKLIIKYNKQLKMLNLRDGKTYTISEDERADITLKSLGEVIHLEQNNQGTWQANHTSINKVLVRKGDLDDITLQLYTEADYASFAYPSIQDTMTIGPNAYDDMVIQSLMNAIIIKDFQSIQESQYVRIVHDKNTDVYINYELQEQLTNKAYIGDHIYVEGIWLEVQADGLNVLSQNTVASSLIRLTQEMPHAQADDYNTYHRSPRIIHREPTDDIKIERPPQPIQKNNTVIWRSIIPPLVMIALTVVIFLVRPIGIYILMMIGMSTVTIVFGITTYFSEKKKYNKDVEKREKDYKAYLDNKSKEINKAIKAQRFSLNYHYPTVAEIKDIVETKAPRIYEKTSHHHDFLHYKLGIANVEKSFKLDYQEEEFNQRRDELFDDAKELYEFYTDVEQAPLINDLNHGPIAYIGARHLILEELEKMLIQLSTFHSYHDLEFLFVTREDEVETLKWARWLPHMTLRGQNIRGFVYNQRTRDQILTSIYSMIKERIQAVRERSRSNEQIIFTPQLVFVITDMSLIIDHVILEYVNQDLSEYGISLIFVEDVIESLPEHVDTIIDIKSRTEGELITKEKELVQLKFTPENIDNVDKEYIARRLANLIHVEHLKNAIPDSITFLEMYNVKEVDQLDVVNRWRQNETYKTMAVPLGVRGKDDILSLNLHEKAHGPHGLVAGTTGSGKSEIIQSYILSLAINFHPHEVAFLLIDYKGGGMANLFKDLVHLVGTITNLDGDEAMRALTSIKAELRKRQRLFGEHDVNHINQYHKLFKEGVATEPMPHLFIISDEFAELKSEQPDFMKELVSTARIGRSLGIHLILATQKPSGVVDDQIWSNSKFKLALKVQDRQDSNEILKTPDAADITLPGRAYLQVGNNEIYELFQSAWSGATYDIEGDKLEVEDKTIYMINDYGQLQAINKDLSGLEDEETKENQTELEAVIDHIESITTRLEIEEVKRPWLPPLPENVYQEDLVETDFRKLWSDDAKEVELTLGLKDVPEEQYQGPMVLQLKKAGHIALIGSPGYGRTTFLHNIIFDVARHHRPDQAHMYLFDFGTNGLMPVTDIPHVADYFTVDQEDKIAKAIRIFNDEIDRRKKILSQYRVTSISEYRKLTGETIPYVFILIDNFDAVKDSPFQEVFENMMIKMTREGLALDMQVTLTASRANAMKTPMYINMKTRIAMFLYDKSEVSNVVGQQKFAVKDVVGRALLSSDDNVSFHIGQPFKHDETKSYNDQINDEVSAMTEFYKGETPNDIPMMPDEIKYEDYRESLSLPDIVANGALPIGLDYEGVTLQKIKLTEPAMISSENPREIAHIAEIMMKEIDILNEKYAICIADSSGEFKAYRHQVANFAEEREDIKAIHQLMIEDLKQREMDGPFEKDSLYIINDFKTYIDCTYIPEDDVKKLITKGPELGLNILFVGIHKELIDAYDKQIDVARKMINQFSIGIRISDQQFFKFRFIQREPVIKENEAYMVANQAYQKIRWFK.

The Cytoplasmic portion of the chain corresponds to Met-1–Asn-229. Residues Thr-230–Val-252 form a helical membrane-spanning segment. Topologically, residues Arg-253 to Gly-256 are extracellular. The helical transmembrane segment at Ile-257–Ser-279 threads the bilayer. Residues Glu-280–Lys-1479 lie on the Cytoplasmic side of the membrane. FtsK domains follow at residues Asp-652–Asn-846 and Gln-997–Ser-1183. ATP is bound by residues Gly-672–Ser-679 and Gly-1014–Thr-1021.

The protein belongs to the EssC family. Homooligomer. Interacts with EsaE.

It is found in the cell membrane. In terms of biological role, component of the type VII secretion system (Ess). Required for the secretion of substrates including EsxA and EsxB. However, unable to support secretion of the substrate protein EsxC. The chain is Type VII secretion system protein EssC from Staphylococcus aureus (strain Mu50 / ATCC 700699).